The chain runs to 213 residues: Holliday junction resolvase RecU (213 aa).

Mg(2+) is bound by residues Thr-98, Asp-100, Glu-113, and Gln-132.

The protein belongs to the RecU family. Mg(2+) serves as cofactor.

It localises to the cytoplasm. The enzyme catalyses Endonucleolytic cleavage at a junction such as a reciprocal single-stranded crossover between two homologous DNA duplexes (Holliday junction).. Its function is as follows. Endonuclease that resolves Holliday junction intermediates in genetic recombination. Cleaves mobile four-strand junctions by introducing symmetrical nicks in paired strands. Promotes annealing of linear ssDNA with homologous dsDNA. Required for DNA repair, homologous recombination and chromosome segregation. This is Holliday junction resolvase RecU from Ligilactobacillus salivarius (strain UCC118) (Lactobacillus salivarius).